The following is a 132-amino-acid chain: Phosphoribosyl-AMP cyclohydrolase (132 aa).

Asp-89 serves as a coordination point for Mg(2+). Residue Cys-90 coordinates Zn(2+). 2 residues coordinate Mg(2+): Asp-91 and Asp-93. Residues Cys-106 and Cys-113 each coordinate Zn(2+).

This sequence belongs to the PRA-CH family. In terms of assembly, homodimer. Requires Mg(2+) as cofactor. The cofactor is Zn(2+).

The protein localises to the cytoplasm. The catalysed reaction is 1-(5-phospho-beta-D-ribosyl)-5'-AMP + H2O = 1-(5-phospho-beta-D-ribosyl)-5-[(5-phospho-beta-D-ribosylamino)methylideneamino]imidazole-4-carboxamide. Its pathway is amino-acid biosynthesis; L-histidine biosynthesis; L-histidine from 5-phospho-alpha-D-ribose 1-diphosphate: step 3/9. Its function is as follows. Catalyzes the hydrolysis of the adenine ring of phosphoribosyl-AMP. In Renibacterium salmoninarum (strain ATCC 33209 / DSM 20767 / JCM 11484 / NBRC 15589 / NCIMB 2235), this protein is Phosphoribosyl-AMP cyclohydrolase.